A 1228-amino-acid chain; its full sequence is DNA-directed RNA polymerase subunit beta (1228 aa).

It belongs to the RNA polymerase beta chain family. The RNAP catalytic core consists of 2 alpha, 1 beta, 1 beta' and 1 omega subunit. When a sigma factor is associated with the core the holoenzyme is formed, which can initiate transcription.

It catalyses the reaction RNA(n) + a ribonucleoside 5'-triphosphate = RNA(n+1) + diphosphate. In terms of biological role, DNA-dependent RNA polymerase catalyzes the transcription of DNA into RNA using the four ribonucleoside triphosphates as substrates. The polypeptide is DNA-directed RNA polymerase subunit beta (Leptospira biflexa serovar Patoc (strain Patoc 1 / Ames)).